A 452-amino-acid chain; its full sequence is Keratin, type II cytoskeletal 80 (452 aa).

Residues Met1 to Gln82 form a head region. Ser45 carries the phosphoserine modification. The segment at Gln82–Leu118 is coil 1A. The 312-residue stretch at Glu83–Met394 folds into the IF rod domain. Residues Gln119–Tyr135 are linker 1. The coil 1B stretch occupies residues Gln136–Leu227. The segment at Ala228–Ile251 is linker 12. Positions Val252–Glu390 are coil 2. The tract at residues Glu391–Glu452 is tail. The residue at position 396 (Ser396) is a Phosphoserine. Residues Ala412–Ile434 are disordered.

The protein belongs to the intermediate filament family. In terms of assembly, heterotetramer of two type I and two type II keratins. In terms of tissue distribution, weakly expressed in tongue, but not skin or in any other tissues or organs examined.

In Homo sapiens (Human), this protein is Keratin, type II cytoskeletal 80 (KRT80).